A 625-amino-acid polypeptide reads, in one-letter code: Archaeosine synthase subunit alpha (625 aa).

A PUA domain is found at lysine 556–lysine 624.

The protein belongs to the archaeosine synthase type 1 family. Forms a robust complex with the archaeosine synthase beta subunit RaSEA. Formation of this complex highly increases lysine transfer activity. The complex likely consists of an alpha(2)beta(2) heterotetrameric structure.

The catalysed reaction is 7-cyano-7-carbaguanosine(15) in tRNA + L-lysine = 7-N-[(5S)-5-amino-5-carboxypentyl]formamidino-7-deazaguanosine(15) in tRNA. It functions in the pathway tRNA modification; archaeosine-tRNA biosynthesis. Its function is as follows. Functions in the biosynthesis of archaeosine, a modified nucleoside present in the dihydrouridine loop (D-loop) of archaeal tRNAs. Catalyzes the addition of L-lysine to the cyano group of 7-cyano-7-deazaguanine (preQ0)-modified tRNAs at position 15, to generate q0kN15-tRNA, a q0N lysine adduct identified as 7-N-[(5S)-5-amino-5-carboxypentyl]formamidino-7-deazaguanosine. The protein is Archaeosine synthase subunit alpha of Methanosarcina acetivorans (strain ATCC 35395 / DSM 2834 / JCM 12185 / C2A).